We begin with the raw amino-acid sequence, 340 residues long: Uroporphyrinogen decarboxylase (340 aa).

Substrate contacts are provided by residues 21–25 (RQAGR), Asp71, Tyr147, Ser202, and His316.

The protein belongs to the uroporphyrinogen decarboxylase family. As to quaternary structure, homodimer.

The protein localises to the cytoplasm. The enzyme catalyses uroporphyrinogen III + 4 H(+) = coproporphyrinogen III + 4 CO2. It participates in porphyrin-containing compound metabolism; protoporphyrin-IX biosynthesis; coproporphyrinogen-III from 5-aminolevulinate: step 4/4. In terms of biological role, catalyzes the decarboxylation of four acetate groups of uroporphyrinogen-III to yield coproporphyrinogen-III. The polypeptide is Uroporphyrinogen decarboxylase (Nitratiruptor sp. (strain SB155-2)).